A 323-amino-acid polypeptide reads, in one-letter code: tRNA U34 carboxymethyltransferase (323 aa).

Carboxy-S-adenosyl-L-methionine-binding positions include Lys91, Trp105, Lys110, Gly130, 152–154 (DPT), 181–182 (IE), Met196, Tyr200, and Arg315.

It belongs to the class I-like SAM-binding methyltransferase superfamily. CmoB family. Homotetramer.

The catalysed reaction is carboxy-S-adenosyl-L-methionine + 5-hydroxyuridine(34) in tRNA = 5-carboxymethoxyuridine(34) in tRNA + S-adenosyl-L-homocysteine + H(+). In terms of biological role, catalyzes carboxymethyl transfer from carboxy-S-adenosyl-L-methionine (Cx-SAM) to 5-hydroxyuridine (ho5U) to form 5-carboxymethoxyuridine (cmo5U) at position 34 in tRNAs. This chain is tRNA U34 carboxymethyltransferase, found in Escherichia coli O6:H1 (strain CFT073 / ATCC 700928 / UPEC).